The primary structure comprises 296 residues: Light-independent protochlorophyllide reductase iron-sulfur ATP-binding protein (296 aa).

ATP contacts are provided by residues 39 to 44 (GIGKST) and K68. S43 is a Mg(2+) binding site. [4Fe-4S] cluster is bound by residues C124 and C158. 209 to 210 (NR) lines the ATP pocket.

Belongs to the NifH/BchL/ChlL family. Homodimer. Protochlorophyllide reductase is composed of three subunits; ChlL, ChlN and ChlB. [4Fe-4S] cluster is required as a cofactor.

It carries out the reaction chlorophyllide a + oxidized 2[4Fe-4S]-[ferredoxin] + 2 ADP + 2 phosphate = protochlorophyllide a + reduced 2[4Fe-4S]-[ferredoxin] + 2 ATP + 2 H2O. The protein operates within porphyrin-containing compound metabolism; chlorophyll biosynthesis (light-independent). Functionally, component of the dark-operative protochlorophyllide reductase (DPOR) that uses Mg-ATP and reduced ferredoxin to reduce ring D of protochlorophyllide (Pchlide) to form chlorophyllide a (Chlide). This reaction is light-independent. The L component serves as a unique electron donor to the NB-component of the complex, and binds Mg-ATP. In Prochlorococcus marinus (strain MIT 9211), this protein is Light-independent protochlorophyllide reductase iron-sulfur ATP-binding protein.